We begin with the raw amino-acid sequence, 654 residues long: Threonine--tRNA ligase (654 aa).

Positions 1 to 63 (MAQISLTFPD…DADASIAIHT (63 aa)) constitute a TGS domain. The tract at residues 247–544 (DHRKLGREMN…LIENFAGKLP (298 aa)) is catalytic. 3 residues coordinate Zn(2+): C344, H395, and H521.

Belongs to the class-II aminoacyl-tRNA synthetase family. As to quaternary structure, homodimer. Zn(2+) serves as cofactor.

Its subcellular location is the cytoplasm. It catalyses the reaction tRNA(Thr) + L-threonine + ATP = L-threonyl-tRNA(Thr) + AMP + diphosphate + H(+). Functionally, catalyzes the attachment of threonine to tRNA(Thr) in a two-step reaction: L-threonine is first activated by ATP to form Thr-AMP and then transferred to the acceptor end of tRNA(Thr). Also edits incorrectly charged L-seryl-tRNA(Thr). In Dinoroseobacter shibae (strain DSM 16493 / NCIMB 14021 / DFL 12), this protein is Threonine--tRNA ligase.